The following is a 599-amino-acid chain: Elongation factor 4 (599 aa).

A tr-type G domain is found at 2 to 184 (KNIRNFSIIA…RLVRDIPPPQ (183 aa)). GTP is bound by residues 14–19 (DHGKST) and 131–134 (NKID).

This sequence belongs to the TRAFAC class translation factor GTPase superfamily. Classic translation factor GTPase family. LepA subfamily.

The protein localises to the cell inner membrane. The catalysed reaction is GTP + H2O = GDP + phosphate + H(+). In terms of biological role, required for accurate and efficient protein synthesis under certain stress conditions. May act as a fidelity factor of the translation reaction, by catalyzing a one-codon backward translocation of tRNAs on improperly translocated ribosomes. Back-translocation proceeds from a post-translocation (POST) complex to a pre-translocation (PRE) complex, thus giving elongation factor G a second chance to translocate the tRNAs correctly. Binds to ribosomes in a GTP-dependent manner. The chain is Elongation factor 4 from Salmonella agona (strain SL483).